Here is a 153-residue protein sequence, read N- to C-terminus: Transcription antitermination protein NusB (153 aa).

The protein belongs to the NusB family.

In terms of biological role, involved in transcription antitermination. Required for transcription of ribosomal RNA (rRNA) genes. Binds specifically to the boxA antiterminator sequence of the ribosomal RNA (rrn) operons. The polypeptide is Transcription antitermination protein NusB (Symbiobacterium thermophilum (strain DSM 24528 / JCM 14929 / IAM 14863 / T)).